The following is a 760-amino-acid chain: Catecholate siderophore receptor Fiu (760 aa).

A signal peptide spans Met1–Ala31. The TBDR plug domain maps to Pro67–Lys175. Residues Asp180–Phe760 enclose the TBDR beta-barrel domain. The TonB C-terminal box signature appears at Arg743–Phe760.

The protein belongs to the TonB-dependent receptor family.

The protein resides in the cell outer membrane. Its function is as follows. Involved in the active transport across the outer membrane of iron complexed with catecholate siderophores such as dihydroxybenzoylserine and dihydroxybenzoate. It derives its energy for transport by interacting with the trans-periplasmic membrane protein TonB. Can also transport catechol-substituted cephalosporins. Receptor for microcins M, H47 and E492. This Escherichia coli (strain UTI89 / UPEC) protein is Catecholate siderophore receptor Fiu (fiu).